The sequence spans 117 residues: Large ribosomal subunit protein bL20c (117 aa).

It belongs to the bacterial ribosomal protein bL20 family.

The protein localises to the plastid. It is found in the chloroplast. In terms of biological role, binds directly to 23S ribosomal RNA and is necessary for the in vitro assembly process of the 50S ribosomal subunit. It is not involved in the protein synthesizing functions of that subunit. In Carica papaya (Papaya), this protein is Large ribosomal subunit protein bL20c.